Reading from the N-terminus, the 272-residue chain is Imidazole glycerol phosphate synthase subunit HisF (272 aa).

Catalysis depends on residues D12 and D131.

Belongs to the HisA/HisF family. In terms of assembly, heterodimer of HisH and HisF.

It localises to the cytoplasm. It catalyses the reaction 5-[(5-phospho-1-deoxy-D-ribulos-1-ylimino)methylamino]-1-(5-phospho-beta-D-ribosyl)imidazole-4-carboxamide + L-glutamine = D-erythro-1-(imidazol-4-yl)glycerol 3-phosphate + 5-amino-1-(5-phospho-beta-D-ribosyl)imidazole-4-carboxamide + L-glutamate + H(+). It participates in amino-acid biosynthesis; L-histidine biosynthesis; L-histidine from 5-phospho-alpha-D-ribose 1-diphosphate: step 5/9. IGPS catalyzes the conversion of PRFAR and glutamine to IGP, AICAR and glutamate. The HisF subunit catalyzes the cyclization activity that produces IGP and AICAR from PRFAR using the ammonia provided by the HisH subunit. The chain is Imidazole glycerol phosphate synthase subunit HisF from Methanopyrus kandleri (strain AV19 / DSM 6324 / JCM 9639 / NBRC 100938).